Consider the following 341-residue polypeptide: Heat-inducible transcription repressor HrcA (341 aa).

It belongs to the HrcA family.

Negative regulator of class I heat shock genes (grpE-dnaK-dnaJ and groELS operons). Prevents heat-shock induction of these operons. In Corynebacterium glutamicum (strain ATCC 13032 / DSM 20300 / JCM 1318 / BCRC 11384 / CCUG 27702 / LMG 3730 / NBRC 12168 / NCIMB 10025 / NRRL B-2784 / 534), this protein is Heat-inducible transcription repressor HrcA.